The sequence spans 432 residues: N-acylneuraminate cytidylyltransferase (432 aa).

The substrate site is built by Arg-39, Asn-49, Arg-98, Ser-107, Ser-109, and Gln-130. Residue Arg-188 is part of the active site.

Belongs to the CMP-NeuNAc synthase family. In terms of assembly, homotetramer; the active enzyme is formed by a dimer of dimers. In terms of tissue distribution, expressed in testis, ovary and liver.

The protein resides in the nucleus. It carries out the reaction an N-acylneuraminate + CTP = a CMP-N-acyl-beta-neuraminate + diphosphate. It participates in amino-sugar metabolism; N-acetylneuraminate metabolism. Functionally, catalyzes the activation of N-acetylneuraminic acid (NeuNAc) to cytidine 5'-monophosphate N-acetylneuraminic acid (CMP-NeuNAc), a substrate required for the addition of sialic acid. The protein is N-acylneuraminate cytidylyltransferase (cmas) of Oncorhynchus mykiss (Rainbow trout).